We begin with the raw amino-acid sequence, 249 residues long: tRNA pseudouridine synthase A (249 aa).

Aspartate 53 acts as the Nucleophile in catalysis. Tyrosine 111 provides a ligand contact to substrate.

This sequence belongs to the tRNA pseudouridine synthase TruA family. As to quaternary structure, homodimer.

The catalysed reaction is uridine(38/39/40) in tRNA = pseudouridine(38/39/40) in tRNA. Its function is as follows. Formation of pseudouridine at positions 38, 39 and 40 in the anticodon stem and loop of transfer RNAs. The protein is tRNA pseudouridine synthase A of Streptococcus pneumoniae serotype 19F (strain G54).